Consider the following 798-residue polypeptide: Integrin beta-1-B (798 aa).

An N-terminal signal peptide occupies residues 1–21 (MARYPVFTFVFLICLVLCTNA). Residues 22 to 727 (QQGGTECLKA…VKEPECPSGP (706 aa)) lie on the Extracellular side of the membrane. The 51-residue stretch at 27-77 (ECLKANAKSCGECIQAGPNCGWCTKVDFLQEGEPTSARCDDLAALKTKGCP) folds into the PSI domain. Cystine bridges form between Cys28/Cys46, Cys36/Cys464, Cys39/Cys65, Cys49/Cys76, Cys206/Cys212, Cys260/Cys300, Cys400/Cys414, Cys434/Cys462, Cys466/Cys486, Cys477/Cys489, Cys491/Cys500, Cys502/Cys533, Cys516/Cys531, Cys525/Cys536, Cys538/Cys553, Cys555/Cys576, Cys560/Cys574, Cys568/Cys579, Cys581/Cys590, Cys592/Cys615, Cys599/Cys613, Cys607/Cys618, Cys620/Cys630, Cys633/Cys636, Cys640/Cys691, Cys646/Cys665, Cys649/Cys661, and Cys699/Cys723. The disordered stretch occupies residues 77-106 (PEDDIQNPRGRKQKLKDIPITSKGKGERMD). 2 N-linked (GlcNAc...) asparagine glycosylation sites follow: Asn109 and Asn131. A VWFA domain is found at 139-377 (DYPIDLYYLM…QLIIDSYNSL (239 aa)). 2 residues coordinate Mg(2+): Ser151 and Ser153. Positions 153, 156, 157, and 188 each coordinate Ca(2+). Asn211 and Asn223 each carry an N-linked (GlcNAc...) asparagine glycan. Ca(2+) is bound by residues Asn243, Asp245, Pro247, and Glu248. Glu248 provides a ligand contact to Mg(2+). Asn268 and Asn362 each carry an N-linked (GlcNAc...) asparagine glycan. The N-linked (GlcNAc...) asparagine glycan is linked to Asn416. I-EGF domains lie at 466–501 (CQDK…KECE), 502–554 (CSTD…KYCE), 555–591 (CDNF…SACD), and 592–631 (CSED…PTCE). N-linked (GlcNAc...) asparagine glycosylation is present at Asn481. N-linked (GlcNAc...) asparagine glycosylation occurs at Asn520. N-linked (GlcNAc...) asparagine glycosylation occurs at Asn584. N-linked (GlcNAc...) asparagine glycosylation occurs at Asn669. Residues 728-751 (DIIPIVAGVVAGIVLIGLALLLIW) traverse the membrane as a helical segment. The Cytoplasmic portion of the chain corresponds to 752–798 (KLLMIIHDRREFAKFEKEKMNAKWDTGENPIYKSAVATVVNPKYEGK). Tyr783 carries the post-translational modification Phosphotyrosine.

Belongs to the integrin beta chain family. As to quaternary structure, heterodimer of an alpha and a beta subunit.

The protein resides in the cell membrane. The protein localises to the cell projection. Its subcellular location is the invadopodium membrane. It is found in the ruffle membrane. It localises to the melanosome. The protein resides in the cleavage furrow. The protein localises to the lamellipodium. Its subcellular location is the ruffle. Functionally, beta integrins associate with alpha subunits to form receptor complexes that recognize the sequence R-G-D in a wide array of ligands. May be involved in osteoblast compaction. May play role in myoblast differentiation and fusion during skeletal myogenesis. This is Integrin beta-1-B (itgb1-b) from Xenopus laevis (African clawed frog).